The chain runs to 39 residues: Photosystem II reaction center protein L (39 aa).

The helical transmembrane segment at Ser18–Phe38 threads the bilayer.

The protein belongs to the PsbL family. PSII is composed of 1 copy each of membrane proteins PsbA, PsbB, PsbC, PsbD, PsbE, PsbF, PsbH, PsbI, PsbJ, PsbK, PsbL, PsbM, PsbT, PsbX, PsbY, PsbZ, Psb30/Ycf12, peripheral proteins PsbO, CyanoQ (PsbQ), PsbU, PsbV and a large number of cofactors. It forms dimeric complexes.

Its subcellular location is the cellular thylakoid membrane. One of the components of the core complex of photosystem II (PSII). PSII is a light-driven water:plastoquinone oxidoreductase that uses light energy to abstract electrons from H(2)O, generating O(2) and a proton gradient subsequently used for ATP formation. It consists of a core antenna complex that captures photons, and an electron transfer chain that converts photonic excitation into a charge separation. This subunit is found at the monomer-monomer interface and is required for correct PSII assembly and/or dimerization. This Microcystis aeruginosa (strain NIES-843 / IAM M-2473) protein is Photosystem II reaction center protein L.